Here is a 3323-residue protein sequence, read N- to C-terminus: Mucin-3A (3323 aa).

Residues 1–15 form the signal peptide; that stretch reads MQLLGLLGLLWMLKA. 15 disordered regions span residues 218 to 243, 270 to 289, 325 to 345, 359 to 380, 539 to 677, 700 to 722, 734 to 756, 909 to 991, 1170 to 1201, 1318 to 1356, 1380 to 1442, 1484 to 1509, 1714 to 1746, 1793 to 1844, and 1900 to 2056; these read TISS…TSPT, TSMT…SSPT, ISRS…STVT, GTLS…TETA, MSAS…PSTE, NASS…GTNS, ETSS…KTAK, SFSS…TLTP, ISSA…TTPT, AESA…FPSS, AMTS…TNPV, TMTE…ETAK, TPSS…TPTS, FTSS…YPTS, and TSHS…SHST. A compositionally biased stretch (low complexity) spans 270–284; it reads TSMTTTASQPTATNT. Positions 545–563 are enriched in polar residues; it reads GTTHTESISSPPASTSTLH. Over residues 564-618 the composition is skewed to low complexity; that stretch reads TTAESTLAPTTTTSFTTSTTMEPPSTTAATTGTGQTTFTSSTATFPETTTPTPTT. Residues 619 to 629 are compositionally biased toward polar residues; sequence DMSTESLTTAM. A compositionally biased stretch (low complexity) spans 630–676; sequence TSPPITSSVTSTNTVTSMTTTTSPPTTTNSFTSLTSMPLSSTPVPST. Residues 700–721 are compositionally biased toward polar residues; the sequence is NASSMTTSETTYPNSPTGPGTN. Over residues 909-918 the composition is skewed to low complexity; the sequence is SFSSSMSESS. The span at 919–932 shows a compositional bias: polar residues; that stretch reads AGTTHTESISSPRG. The segment covering 933–991 has biased composition (low complexity); sequence TTSTLHTTVESTPSPTTTTSFTTSTMMEPPSSTVSTTGRGQTTFPSSTATFPETTTLTP. Positions 1324–1356 are enriched in low complexity; sequence PTTTTSFTTSPTMEPPSTTVATTGTGQTTFPSS. 32 repeat units span residues 1893 to 1910, 1911 to 1927, 1928 to 1944, 1945 to 1961, 1962 to 1978, 1979 to 1995, 1996 to 2012, 2013 to 2029, 2030 to 2046, 2047 to 2062, 2063 to 2079, 2080 to 2096, 2097 to 2113, 2114 to 2130, 2131 to 2147, 2148 to 2164, 2165 to 2191, 2192 to 2208, 2209 to 2225, 2226 to 2242, 2243 to 2259, 2260 to 2276, 2277 to 2293, 2294 to 2310, 2311 to 2327, 2328 to 2344, 2345 to 2361, 2362 to 2378, 2379 to 2395, 2396 to 2412, 2413 to 2429, and 2430 to 2446. The 32 X approximate tandem repeats, Ser/Thr-rich stretch occupies residues 1893–2446; it reads VTTTTKITSH…SESTPSLSSS (554 aa). The span at 1907–1947 shows a compositional bias: polar residues; sequence FTSSIATTETPSHSTPRFTSSITTTETPSHSTPRFTSSITN. Residues 1948 to 2056 are compositionally biased toward low complexity; it reads TKTTSHSSPS…ITTETTSHST (109 aa). Low complexity-rich tracts occupy residues 2100–2170, 2177–2384, 2393–2447, and 2464–2507; these read TETT…TTET, TTET…TTET, TSWV…SSST, and TTSE…TTTT. Disordered stretches follow at residues 2100-2447, 2464-2508, 2578-2608, 2631-2656, 2834-2858, and 2897-2937; these read TETT…SSST, TTSE…TTTD, TQTP…DSST, IPST…TSTS, MMPE…VPTN, and SSLP…TSRR. Positions 2578–2602 are enriched in polar residues; it reads TQTPPVLTSATGTQTSPAPTTVTFG. 3 stretches are compositionally biased toward low complexity: residues 2633 to 2656, 2834 to 2849, and 2905 to 2937; these read STHS…TSTS, MMPE…ASSS, and TSSK…TSRR. An EGF-like domain is found at 2976–3009; that stretch reads SGDRCQLQTRCQNGGQWDGLKCQCPSTFYGSSCE. 2 disulfides stabilise this stretch: C2980–C2986 and C2999–C3008. The 126-residue stretch at 3018–3143 folds into the SEA domain; sequence DVVETEVGME…DSIKVNNNSK (126 aa). A helical transmembrane segment spans residues 3227–3247; sequence LVGGLTAGAALLVLLLLALGV.

Post-translationally, highly O-glycosylated and probably also N-glycosylated. Broad specificity; small intestine, colon, colonic tumors, heart, liver, thymus, prostate, pancreas and gall bladder.

Its subcellular location is the membrane. It localises to the secreted. Its function is as follows. Major glycoprotein component of a variety of mucus gels. Thought to provide a protective, lubricating barrier against particles and infectious agents at mucosal surfaces. May be involved in ligand binding and intracellular signaling. The protein is Mucin-3A of Homo sapiens (Human).